Here is a 129-residue protein sequence, read N- to C-terminus: Succinate dehydrogenase subunit 3-2, mitochondrial (129 aa).

Residues 1–58 (MEKYQSKARFAPLSDAPFALRGALGSSNSSFNNIDHLRQSSSSGQARSYTSSPLGALR) constitute a mitochondrion transit peptide. Residues 27 to 53 (SNSSFNNIDHLRQSSSSGQARSYTSSP) are compositionally biased toward polar residues. The tract at residues 27–66 (SNSSFNNIDHLRQSSSSGQARSYTSSPLGALRPKMFPSGN) is disordered. His87 contacts heme. Residues 105-127 (IFGAALGAVIISIPLATKFSLMF) form a helical membrane-spanning segment.

In terms of assembly, component of complex II composed of eight subunits in plants: four classical SDH subunits SDH1, SDH2, SDH3 and SDH4 (a flavoprotein (FP), an iron-sulfur protein (IP), and a cytochrome b composed of a large and a small subunit.), as well as four subunits unknown in mitochondria from bacteria and heterotrophic eukaryotes. It depends on heme as a cofactor.

The protein localises to the mitochondrion inner membrane. Its pathway is carbohydrate metabolism; tricarboxylic acid cycle. Membrane-anchoring subunit of succinate dehydrogenase (SDH). In Oryza sativa subsp. japonica (Rice), this protein is Succinate dehydrogenase subunit 3-2, mitochondrial.